The sequence spans 556 residues: Formate--tetrahydrofolate ligase (556 aa).

ATP is bound at residue 65–72 (TPAGEGKS).

It belongs to the formate--tetrahydrofolate ligase family.

It carries out the reaction (6S)-5,6,7,8-tetrahydrofolate + formate + ATP = (6R)-10-formyltetrahydrofolate + ADP + phosphate. Its pathway is one-carbon metabolism; tetrahydrofolate interconversion. The polypeptide is Formate--tetrahydrofolate ligase (Clostridium beijerinckii (strain ATCC 51743 / NCIMB 8052) (Clostridium acetobutylicum)).